The chain runs to 905 residues: Respiratory burst oxidase homolog protein B (905 aa).

Disordered stretches follow at residues 1–46 (MADL…KTAR) and 69–134 (EVRG…VRKR). Topologically, residues 1–355 (MADLEAGMVA…MYFLEENWKR (355 aa)) are cytoplasmic. The segment covering 29–44 (IPNSGNLGSSNRSTKT) has biased composition (polar residues). A compositionally biased stretch (gly residues) spans 75-84 (EGGSGHGTGF). Residues 91 to 108 (SPSSKSGKLTSKLRQVTN) are compositionally biased toward polar residues. EF-hand-like regions lie at residues 172–180 (QVDGVLLRS) and 206–217 (RGIVKQVLTKDE). EF-hand domains lie at 229–264 (GFDN…SASA) and 273–308 (RADE…SPSE). 5 residues coordinate Ca(2+): D242, N244, D246, R248, and E253. A helical membrane pass occupies residues 356–376 (SWVMTLWISICIALFIWKFIQ). The Extracellular segment spans residues 377 to 440 (YRNRAVFGIM…FNDNINFHKV (64 aa)). Residues 395–551 (GAAETLKFNM…HLFVIVYTLL (157 aa)) enclose the Ferric oxidoreductase domain. The helical transmembrane segment at 441–461 (IAAGVAVGVALHAGAHLTCDF) threads the bilayer. The Cytoplasmic portion of the chain corresponds to 462–496 (PRLLHASDAQYELMKPFFGEKRPPNYWWFVKGTEG). The chain crosses the membrane as a helical span at residues 497–517 (WTGVVMVVLMAIAFTLAQPWF). Residues 518 to 539 (RRNKLKDSNPLKKMTGFNAFWF) lie on the Extracellular side of the membrane. A helical transmembrane segment spans residues 540 to 560 (THHLFVIVYTLLFVHGTCLYL). Residues 561-568 (SRKWYKKT) are Cytoplasmic-facing. A helical transmembrane segment spans residues 569 to 586 (TWMYLAVPVVLYVSERIL). Positions 587–715 (RLFRSHDAVG…DGPYGAPAQD (129 aa)) constitute an FAD-binding FR-type domain. The Extracellular segment spans residues 587–717 (RLFRSHDAVG…PYGAPAQDYR (131 aa)). A helical membrane pass occupies residues 718–738 (EYDVLLLIGLGIGATPLISIV). Residues 739 to 905 (KDVLNHIQGE…TRFDFHKENF (167 aa)) are Cytoplasmic-facing.

This sequence belongs to the RBOH (TC 5.B.1.3) family. In terms of assembly, monomer and homodimer, stabilized by swapping the EF-hand motifs. Interacts with GTP-bound RAC1.

Its subcellular location is the membrane. In terms of biological role, calcium-dependent NADPH oxidase that generates superoxide. The sequence is that of Respiratory burst oxidase homolog protein B (RBOHB) from Oryza sativa subsp. japonica (Rice).